Consider the following 516-residue polypeptide: Histone H4 transcription factor (516 aa).

3 C2H2-type zinc fingers span residues 15–39, 127–151, and 167–191; these read LQCEWGSCSFVCSAMEEFCEHVTQH, FLCLWEHCENSFDNPEWFYRHVEAH, and VLCGWKGCTCTFKDRFKLREHLRSH. The C2H2-type 4; degenerate zinc-finger motif lies at 197-219; it reads VACPTCGGMFANNTKFLDHIRRQ. 5 C2H2-type zinc fingers span residues 227-249, 253-276, 282-304, 310-335, and 343-366; these read FQCSHCSKRFATERLLRDHMRNH, YKCPLCDMTCPLPSSLRNHMRFRH, FKCDCCDYSCKNLIDLRKHLDTH, YSCDFENCTFSARSLYSIKSHYRKVH, and YRCHVCDKCFTRGNNLTVHLRKKH. The segment at 371 to 516 is interaction with NPAT; sequence PSGHPRFRYK…AAEEPEVQMV (146 aa). Positions 372 to 405 are required for activation of histone H4 transcription and contributes to DNA-binding; the sequence is SGHPRFRYKEHEDGYMRLQLVRYESVELTQQLLR. Disordered stretches follow at residues 429–456 and 486–516; these read TVPGEPGPQEEAEEEGGGGEGIALPASQ and PGEPPPASEPPSGGVMGELQGAAEEPEVQMV. Residues 436-445 show a composition bias toward acidic residues; the sequence is PQEEAEEEGG.

Binds MBD2 and a histone deacetylase complex. Interacts with NPAT. Ubiquitinated. Ubiquitination may lead to proteasome-mediated degradation.

It is found in the nucleus. Its function is as follows. Transcriptional repressor that binds to the consensus sequence 5'-CGGACGTT-3' and to the RB1 promoter. Transcriptional activator that promotes histone H4 gene transcription at the G1/S phase transition in conjunction with NPAT. Also activates transcription of the ATM and PRKDC genes. Autoregulates its expression by associating with its own promoter. This Bos taurus (Bovine) protein is Histone H4 transcription factor (HINFP).